We begin with the raw amino-acid sequence, 305 residues long: Heme A synthase (305 aa).

The Cytoplasmic portion of the chain corresponds to 1–6; it reads MKKFLK. The chain crosses the membrane as a helical span at residues 7 to 27; sequence VWSVLTIICMTVVVFGGALVT. Over 28 to 63 the chain is Extracellular; the sequence is KTGSADGCGNSWPLCNGQLVRLTDVTPEKLIEFMHR. Cysteines 35 and 42 form a disulfide. The active site involves Glu59. A heme o-binding site is contributed by His62. Residues 64-84 form a helical membrane-spanning segment; sequence MTTGISSIFVIVLAICAWIYM. The Cytoplasmic segment spans residues 85-92; it reads KNRRETKP. Residues 93–113 form a helical membrane-spanning segment; that stretch reads LAIIAVLFLIIQALMGMAAVV. Residues 114 to 122 lie on the Extracellular side of the membrane; the sequence is WGQNPYIMA. Residues 123–143 traverse the membrane as a helical segment; sequence LHFGISIICYASIVLLALMIF. Residue His124 coordinates heme o. The Cytoplasmic portion of the chain corresponds to 144-160; the sequence is EVDRKFDARNLVMGTKL. Residues 161 to 181 form a helical membrane-spanning segment; the sequence is RINIYALTIYTYLAVYTGALV. At 182-212 the chain is on the extracellular side; the sequence is RHEKASMAVPVWPFENGHFIMPTSVQDYVQY. Residues 213–233 form a helical membrane-spanning segment; it reads FHRLAAFILIVWLLYVTWLVF. His214 contacts heme b. The Cytoplasmic segment spans residues 234–240; that stretch reads RDYRRYR. The chain crosses the membrane as a helical span at residues 241 to 261; it reads VLTFSMVLSLVFIALQAVTGA. Residues 262–271 lie on the Extracellular side of the membrane; that stretch reads LSVYTGVNLY. The helical transmembrane segment at 272–292 threads the bilayer; that stretch reads IALAHSLIITMLFALLCYLCL. Position 276 (His276) interacts with heme b. Topologically, residues 293–305 are cytoplasmic; that stretch reads LASRSKSNRLRIK.

This sequence belongs to the COX15/CtaA family. Type 1 subfamily. In terms of assembly, interacts with CtaB. The cofactor is heme b.

It is found in the cell membrane. It carries out the reaction Fe(II)-heme o + 2 A + H2O = Fe(II)-heme a + 2 AH2. The protein operates within porphyrin-containing compound metabolism; heme A biosynthesis; heme A from heme O: step 1/1. Its function is as follows. Catalyzes the conversion of heme O to heme A by two successive hydroxylations of the methyl group at C8. The first hydroxylation forms heme I, the second hydroxylation results in an unstable dihydroxymethyl group, which spontaneously dehydrates, resulting in the formyl group of heme A. This chain is Heme A synthase, found in Listeria monocytogenes serotype 4b (strain F2365).